The chain runs to 136 residues: Transmembrane protein 203 (136 aa).

4 helical membrane-spanning segments follow: residues 14 to 34 (FAQL…VLLA), 50 to 72 (FIPF…VRLF), 81 to 101 (VLRL…EMLL), and 112 to 132 (LWYG…MIRA).

The protein resides in the endoplasmic reticulum membrane. The protein localises to the endoplasmic reticulum-Golgi intermediate compartment. Involved in the regulation of cellular calcium homeotasis. May act as a regulator of STING-mediated inflammatory signaling in macrophages. This is Transmembrane protein 203 (tmem203) from Xenopus laevis (African clawed frog).